Reading from the N-terminus, the 279-residue chain is Movement protein (279 aa).

Residues 255-279 (SPPFAIGSPSASRNNSFRSQVVNGL) are disordered. The span at 263 to 279 (PSASRNNSFRSQVVNGL) shows a compositional bias: polar residues.

It belongs to the cucumovirus movement protein family.

It localises to the host cell junction. It is found in the host plasmodesma. Transports viral genome to neighboring plant cells directly through plasmosdesmata, without any budding. The movement protein allows efficient cell to cell propagation, by bypassing the host cell wall barrier. Acts by forming a tubular structure at the host plasmodesmata, enlarging it enough to allow free passage of virion capsids. The protein is Movement protein of Cucumis sativus (Cucumber).